The following is a 269-amino-acid chain: Formamidopyrimidine-DNA glycosylase (269 aa).

Pro-2 acts as the Schiff-base intermediate with DNA in catalysis. Glu-3 (proton donor) is an active-site residue. Lys-57 serves as the catalytic Proton donor; for beta-elimination activity. DNA-binding residues include His-90, Arg-109, and Lys-150. The segment at 235–269 (QVYGRKGEPCRVCGTPIVATKHAQRATFYCRQCQK) adopts an FPG-type zinc-finger fold. The active-site Proton donor; for delta-elimination activity is Arg-259.

This sequence belongs to the FPG family. As to quaternary structure, monomer. Requires Zn(2+) as cofactor.

The catalysed reaction is Hydrolysis of DNA containing ring-opened 7-methylguanine residues, releasing 2,6-diamino-4-hydroxy-5-(N-methyl)formamidopyrimidine.. It carries out the reaction 2'-deoxyribonucleotide-(2'-deoxyribose 5'-phosphate)-2'-deoxyribonucleotide-DNA = a 3'-end 2'-deoxyribonucleotide-(2,3-dehydro-2,3-deoxyribose 5'-phosphate)-DNA + a 5'-end 5'-phospho-2'-deoxyribonucleoside-DNA + H(+). In terms of biological role, involved in base excision repair of DNA damaged by oxidation or by mutagenic agents. Acts as a DNA glycosylase that recognizes and removes damaged bases. Has a preference for oxidized purines, such as 7,8-dihydro-8-oxoguanine (8-oxoG). Has AP (apurinic/apyrimidinic) lyase activity and introduces nicks in the DNA strand. Cleaves the DNA backbone by beta-delta elimination to generate a single-strand break at the site of the removed base with both 3'- and 5'-phosphates. The chain is Formamidopyrimidine-DNA glycosylase from Escherichia coli O6:K15:H31 (strain 536 / UPEC).